We begin with the raw amino-acid sequence, 243 residues long: Adenosylcobinamide-GDP ribazoletransferase (243 aa).

Helical transmembrane passes span 8 to 28 (WLGAIAFYTCLPISPRWPIQL), 36 to 56 (PWVGLVLGGMLWGVQWLLDFL), 58 to 78 (VPSPVASAVLVALWLALTGGL), 107 to 127 (AGAFGVMAAMVILLLKVTSLS), 131 to 151 (KGSVLVWVLVLGRLAQVWAIA), 187 to 207 (FLLPLPLGQLLFGLLLILLIP), and 222 to 242 (YGAVVEWTEALLLVAFTVGSA).

It belongs to the CobS family. Mg(2+) is required as a cofactor.

It is found in the cell inner membrane. It catalyses the reaction alpha-ribazole + adenosylcob(III)inamide-GDP = adenosylcob(III)alamin + GMP + H(+). It carries out the reaction alpha-ribazole 5'-phosphate + adenosylcob(III)inamide-GDP = adenosylcob(III)alamin 5'-phosphate + GMP + H(+). Its pathway is cofactor biosynthesis; adenosylcobalamin biosynthesis; adenosylcobalamin from cob(II)yrinate a,c-diamide: step 7/7. In terms of biological role, joins adenosylcobinamide-GDP and alpha-ribazole to generate adenosylcobalamin (Ado-cobalamin). Also synthesizes adenosylcobalamin 5'-phosphate from adenosylcobinamide-GDP and alpha-ribazole 5'-phosphate. This Thermosynechococcus vestitus (strain NIES-2133 / IAM M-273 / BP-1) protein is Adenosylcobinamide-GDP ribazoletransferase.